We begin with the raw amino-acid sequence, 262 residues long: Malonyl-[acyl-carrier protein] O-methyltransferase (262 aa).

This sequence belongs to the methyltransferase superfamily.

The enzyme catalyses malonyl-[ACP] + S-adenosyl-L-methionine = malonyl-[ACP] methyl ester + S-adenosyl-L-homocysteine. It functions in the pathway cofactor biosynthesis; biotin biosynthesis. Converts the free carboxyl group of a malonyl-thioester to its methyl ester by transfer of a methyl group from S-adenosyl-L-methionine (SAM). It allows to synthesize pimeloyl-ACP via the fatty acid synthetic pathway. The chain is Malonyl-[acyl-carrier protein] O-methyltransferase from Erwinia pyrifoliae (strain DSM 12163 / CIP 106111 / Ep16/96).